Here is a 399-residue protein sequence, read N- to C-terminus: NADH-quinone oxidoreductase subunit D 2 (399 aa).

The disordered stretch occupies residues 1–20 (MIASKESNSAATPATSAPTL). Residues 9 to 20 (SAATPATSAPTL) are compositionally biased toward low complexity.

This sequence belongs to the complex I 49 kDa subunit family. NDH-1 is composed of 14 different subunits. Subunits NuoB, C, D, E, F, and G constitute the peripheral sector of the complex.

The protein localises to the cell inner membrane. The enzyme catalyses a quinone + NADH + 5 H(+)(in) = a quinol + NAD(+) + 4 H(+)(out). NDH-1 shuttles electrons from NADH, via FMN and iron-sulfur (Fe-S) centers, to quinones in the respiratory chain. The immediate electron acceptor for the enzyme in this species is believed to be ubiquinone. Couples the redox reaction to proton translocation (for every two electrons transferred, four hydrogen ions are translocated across the cytoplasmic membrane), and thus conserves the redox energy in a proton gradient. In Opitutus terrae (strain DSM 11246 / JCM 15787 / PB90-1), this protein is NADH-quinone oxidoreductase subunit D 2.